The primary structure comprises 141 residues: 3-hydroxyacyl-[acyl-carrier-protein] dehydratase FabZ (141 aa).

The active site involves His48.

Belongs to the thioester dehydratase family. FabZ subfamily.

Its subcellular location is the cytoplasm. The enzyme catalyses a (3R)-hydroxyacyl-[ACP] = a (2E)-enoyl-[ACP] + H2O. Its function is as follows. Involved in unsaturated fatty acids biosynthesis. Catalyzes the dehydration of short chain beta-hydroxyacyl-ACPs and long chain saturated and unsaturated beta-hydroxyacyl-ACPs. This Streptococcus thermophilus (strain CNRZ 1066) protein is 3-hydroxyacyl-[acyl-carrier-protein] dehydratase FabZ.